Reading from the N-terminus, the 371-residue chain is Deoxyhypusine synthase (371 aa).

Residues 107–111 (SNLIS), 133–135 (TTG), Glu139, and Asp240 contribute to the NAD(+) site. 138 to 139 (EE) lines the spermidine pocket. Position 245 (Asp245) interacts with spermidine. Gly287 is an NAD(+) binding site. His292 contributes to the spermidine binding site. 312–313 (TA) is a binding site for NAD(+). Spermidine-binding positions include 318-320 (GSD) and 327-333 (EAVSWGK). Residue Lys333 is the Nucleophile of the active site. Position 346–347 (346–347 (DA)) interacts with NAD(+).

This sequence belongs to the deoxyhypusine synthase family. The cofactor is NAD(+). Expressed in shoot tips.

It carries out the reaction [eIF5A protein]-L-lysine + spermidine = [eIF5A protein]-deoxyhypusine + propane-1,3-diamine. It participates in protein modification; eIF5A hypusination. In terms of biological role, catalyzes the NAD-dependent oxidative cleavage of spermidine and the subsequent transfer of the butylamine moiety of spermidine to the epsilon-amino group of a specific lysine residue of the eIF-5A precursor protein to form the intermediate deoxyhypusine residue. Also able to produce homospermidine from putrescine. This Senecio vernalis (Spring groundsel) protein is Deoxyhypusine synthase (DHS1).